Here is a 383-residue protein sequence, read N- to C-terminus: MKNICLLGATGSIGEQTLDVLRAHQDQFQLVSMSFGRNIDKAVPMIEVFQPKFVSVGDLDTYHKLKQMSFSFECQIGLGEEGLIEAAVMEEVDIVVNALLGSVGLIPTLKAIEQKKTIALANKETLVTAGHIVKEHAKKYDVPLLPVDSEHSAIFQALQGEQAKNIERLIITASGGSFRDKTREELESVTVEDALKHPNWSMGAKITIDSATMMNKGLEVIEAHWLFDIPYEQIDVVLHKESIIHSMVEFHDKSVIAQLGTPDMRVPIQYALTYPDRLPLPDAKRLELWEIGSLHFEKADFDRFRCLQFAFESGKIGGTMPTVLNAANEVAVAAFLAGKIPFLAIEDCIEKALTRHQLLKKPSLADIQEVDKDTRGYVNSILT.

Thr10, Gly11, Ser12, Ile13, Gly36, Arg37, Asn38, and Asn122 together coordinate NADPH. Lys123 is a 1-deoxy-D-xylulose 5-phosphate binding site. Glu124 provides a ligand contact to NADPH. A Mn(2+)-binding site is contributed by Asp148. Residues Ser149, Glu150, Ser174, and His197 each coordinate 1-deoxy-D-xylulose 5-phosphate. A Mn(2+)-binding site is contributed by Glu150. Gly203 is an NADPH binding site. Residues Ser210, Asn215, Lys216, and Glu219 each coordinate 1-deoxy-D-xylulose 5-phosphate. Glu219 is a Mn(2+) binding site.

It belongs to the DXR family. The cofactor is Mg(2+). Requires Mn(2+) as cofactor.

The catalysed reaction is 2-C-methyl-D-erythritol 4-phosphate + NADP(+) = 1-deoxy-D-xylulose 5-phosphate + NADPH + H(+). It functions in the pathway isoprenoid biosynthesis; isopentenyl diphosphate biosynthesis via DXP pathway; isopentenyl diphosphate from 1-deoxy-D-xylulose 5-phosphate: step 1/6. In terms of biological role, catalyzes the NADPH-dependent rearrangement and reduction of 1-deoxy-D-xylulose-5-phosphate (DXP) to 2-C-methyl-D-erythritol 4-phosphate (MEP). The chain is 1-deoxy-D-xylulose 5-phosphate reductoisomerase from Bacillus subtilis (strain 168).